Reading from the N-terminus, the 262-residue chain is Small ribosomal subunit protein eS4B (262 aa).

Residues 42 to 105 (LPLIVFLRNR…GEHFRLVYDI (64 aa)) form the S4 RNA-binding domain. Phosphoserine is present on Ser-223.

This sequence belongs to the eukaryotic ribosomal protein eS4 family. As to quaternary structure, component of the small ribosomal subunit (SSU). Mature yeast ribosomes consist of a small (40S) and a large (60S) subunit. The 40S small subunit contains 1 molecule of ribosomal RNA (18S rRNA) and at least 33 different proteins. The large 60S subunit contains 3 rRNA molecules (25S, 5.8S and 5S rRNA) and at least 46 different proteins.

It is found in the cytoplasm. The protein resides in the nucleus. Its subcellular location is the nucleolus. In terms of biological role, component of the ribosome, a large ribonucleoprotein complex responsible for the synthesis of proteins in the cell. The small ribosomal subunit (SSU) binds messenger RNAs (mRNAs) and translates the encoded message by selecting cognate aminoacyl-transfer RNA (tRNA) molecules. The large subunit (LSU) contains the ribosomal catalytic site termed the peptidyl transferase center (PTC), which catalyzes the formation of peptide bonds, thereby polymerizing the amino acids delivered by tRNAs into a polypeptide chain. The nascent polypeptides leave the ribosome through a tunnel in the LSU and interact with protein factors that function in enzymatic processing, targeting, and the membrane insertion of nascent chains at the exit of the ribosomal tunnel. The sequence is that of Small ribosomal subunit protein eS4B (rps402) from Schizosaccharomyces pombe (strain 972 / ATCC 24843) (Fission yeast).